We begin with the raw amino-acid sequence, 192 residues long: Group XIIA secretory phospholipase A2 (192 aa).

An N-terminal signal peptide occupies residues 1-25 (MVTPRPAPARSPALLLLLLLATARG). Residues Gly91, Pro93, and Phe95 each coordinate Ca(2+). His113 is an active-site residue. Asp114 provides a ligand contact to Ca(2+). Residue Asp128 is part of the active site.

The protein belongs to the phospholipase A2 family. Requires Ca(2+) as cofactor.

It is found in the secreted. It localises to the cytoplasm. The enzyme catalyses a 1,2-diacyl-sn-glycero-3-phosphocholine + H2O = a 1-acyl-sn-glycero-3-phosphocholine + a fatty acid + H(+). PA2 catalyzes the calcium-dependent hydrolysis of the 2-acyl groups in 3-sn-phosphoglycerides. Does not exhibit detectable activity toward sn-2-arachidonoyl- or linoleoyl-phosphatidylcholine or -phosphatidylethanolamine. The chain is Group XIIA secretory phospholipase A2 (Pla2g12a) from Mus musculus (Mouse).